The chain runs to 369 residues: Phosphoribosyl pyrophosphate synthase-associated protein 2 (369 aa).

N-acetylmethionine is present on M1. S219, S227, and S233 each carry phosphoserine.

This sequence belongs to the ribose-phosphate pyrophosphokinase family. As to quaternary structure, binds to PRPS1 and PRPS2.

Seems to play a negative regulatory role in 5-phosphoribose 1-diphosphate synthesis. This chain is Phosphoribosyl pyrophosphate synthase-associated protein 2 (Prpsap2), found in Mus musculus (Mouse).